Reading from the N-terminus, the 366-residue chain is 8-hydroxyquercetin 8-O-methyltransferase (366 aa).

Residues 207-210 (VGGG), 231-232 (DL), 251-252 (DM), and Lys265 contribute to the S-adenosyl-L-methionine site. Residue His269 is the Proton acceptor of the active site.

Belongs to the class I-like SAM-binding methyltransferase superfamily. Cation-independent O-methyltransferase family. COMT subfamily. Homodimer.

It carries out the reaction 3,3',4',5,7,8-hexahydroxyflavone + S-adenosyl-L-methionine = 3,3',4',5,7-pentahydroxy-8-methoxyflavone + S-adenosyl-L-homocysteine + H(+). The enzyme catalyses 4',7,8-trihydroxyflavone + S-adenosyl-L-methionine = 4',7-dihydroxy-8-methoxyflavone + S-adenosyl-L-homocysteine + H(+). The catalysed reaction is 8-hydroxy-7-methoxyflavone + S-adenosyl-L-methionine = 7,8-dimethoxyflavone + S-adenosyl-L-homocysteine + H(+). It participates in flavonoid metabolism. In terms of biological role, flavonoid 8-O-methyltransferase involved in the biosynthesis of polymethoxylated flavonoids natural products such as pebrellin, aroma compounds which contribute to the flavor of peppermint, and exhibit pharmacological activities such as anti-allergic, anti-oxidant, antibacterial, anti-proliferative, and anti-inflammatory effects. Catalyzes S-adenosylmethionine-dependent regioselective 8-O-methylation of flavonoids; active on various hydroxylated flavonoid substrates, including 7,8,3'4'-tetrahydroxy-flavone, 7,8,4'-trihydroxy-flavone and 8-hydroxy-flavone 7-methyl ether. This is 8-hydroxyquercetin 8-O-methyltransferase from Mentha piperita (Peppermint).